Consider the following 113-residue polypeptide: MTFPFSGAAVKRMLVTGVVLPFGLLVAAGQAQADSQWGSGKNLYDKVCGHCHKPEVGVGPVLEGRGLPEAYIKDIVRNGFRAMPAFPASYVDDESLTQVAEYLSSLPAPAAQP.

A signal peptide spans 1–33 (MTFPFSGAAVKRMLVTGVVLPFGLLVAAGQAQA). Residues C48, C51, H52, and M83 each contribute to the heme c site.

Tetramer of two cytochrome subunits and two flavoprotein subunits. Post-translationally, binds 1 heme c group covalently per subunit.

The protein operates within aromatic compound metabolism; p-cresol degradation. This is the heme-containing component of the p-cresol methylhydroxylase. It accepts electrons from the flavoprotein subunit. The polypeptide is 4-cresol dehydrogenase [hydroxylating] cytochrome c subunit (pchC) (Pseudomonas putida (Arthrobacter siderocapsulatus)).